The sequence spans 651 residues: Probable potassium transport system protein Kup (651 aa).

Transmembrane regions (helical) follow at residues Leu-41–Phe-61, Val-82–Val-102, Leu-130–Pro-150, Ile-163–Leu-183, Val-194–Leu-214, Phe-235–Thr-255, Trp-276–Leu-296, Met-309–Ala-329, Ile-366–Phe-386, Ala-395–Met-415, Ala-426–Ile-446, and Glu-450–Val-470.

It belongs to the HAK/KUP transporter (TC 2.A.72) family.

It is found in the cell inner membrane. It catalyses the reaction K(+)(in) + H(+)(in) = K(+)(out) + H(+)(out). Transport of potassium into the cell. Likely operates as a K(+):H(+) symporter. The polypeptide is Probable potassium transport system protein Kup (Brucella abortus (strain S19)).